The sequence spans 172 residues: Transcription factor MafF (172 aa).

The segment at 51-76 is basic motif; that stretch reads RLKQRRRTLKNRGYAASCRVKRVCQK. In terms of domain architecture, bZIP spans 51–114; that stretch reads RLKQRRRTLK…DALRGKCEAL (64 aa). The segment at 79–93 is leucine-zipper; sequence LQKQKSELEREVDKL. The interval 140–172 is disordered; sequence VKSAPSPGPGPAPGPGPASGPGPAPGPAPAACS. The segment covering 145 to 172 has biased composition (pro residues); that stretch reads SPGPGPAPGPGPASGPGPAPGPAPAACS.

It belongs to the bZIP family. Maf subfamily. In terms of assembly, monomer and homo- or heterodimer. Interacts with MIP. Forms high affinity heterodimers with members of the CNC-bZIP family such as NFE2L1/NRF1.

It is found in the nucleus. Functionally, since they lack a putative transactivation domain, the small Mafs behave as transcriptional repressors when they dimerize among themselves. However, they seem to serve as transcriptional activators by dimerizing with other (usually larger) basic-zipper proteins, such as NFE2L1/NRF1, and recruiting them to specific DNA-binding sites. Interacts with the upstream promoter region of the oxytocin receptor gene. May be a transcriptional enhancer in the up-regulation of the oxytocin receptor gene at parturition. The polypeptide is Transcription factor MafF (MAFF) (Bos taurus (Bovine)).